The chain runs to 424 residues: Putative pachytene checkpoint protein 2 (424 aa).

Gly179–Thr186 lines the ATP pocket.

This sequence belongs to the AAA ATPase family. PCH2 subfamily.

In terms of biological role, plays a key role in chromosome recombination during meiosis. This is Putative pachytene checkpoint protein 2 (pch-2) from Caenorhabditis elegans.